Consider the following 123-residue polypeptide: Large ribosomal subunit protein bL12 (123 aa).

This sequence belongs to the bacterial ribosomal protein bL12 family. As to quaternary structure, homodimer. Part of the ribosomal stalk of the 50S ribosomal subunit. Forms a multimeric L10(L12)X complex, where L10 forms an elongated spine to which 2 to 4 L12 dimers bind in a sequential fashion. Binds GTP-bound translation factors.

In terms of biological role, forms part of the ribosomal stalk which helps the ribosome interact with GTP-bound translation factors. Is thus essential for accurate translation. This is Large ribosomal subunit protein bL12 from Rhodopseudomonas palustris (strain HaA2).